A 624-amino-acid chain; its full sequence is Anti-CBASS protein Acb1 (624 aa).

Residue Y106 participates in 3',3'-cGAMP binding. Residue Y106 participates in 3',3'-cUAMP binding. Residues H503, T505, H581, and T583 contribute to the active site. W617 contributes to the 3',3'-cGAMP binding site. W617 is a 3',3'-cUAMP binding site.

Belongs to the anti-CBASS protein Acb1 family.

The catalysed reaction is 3',3'-cUAMP + H2O = U[3'-5']pAp[3'] + H(+). It carries out the reaction 3',3',3'-c-tri-AMP + H2O = A[3'-5']pA[3'-5']pAp[3'] + H(+). The enzyme catalyses 3',3',3'-cAAG + H2O = G[3'-5']pA[3'-5']pAp[3'] + H(+). It catalyses the reaction 3',3',3'-cAAG + H2O = A[3'-5']pG[3'-5']pAp[3'] + H(+). The catalysed reaction is 3',3'-cGAMP + H2O = G[3'-5']pAp[3'] + H(+). In terms of biological role, counteracts or regulates the endogenous CBASS antiviral defense system. Phosphodiesterase that enables metal-independent hydrolysis of the host cyclic di- and trinucleotide CBASS signals such as 3'3'-cGAMP, 3'3'cUA, and 3'3'3'-cAAA. The sequence is that of Anti-CBASS protein Acb1 from Sphingomonas paeninsulae.